Here is a 412-residue protein sequence, read N- to C-terminus: Multidrug resistance protein MdtA (412 aa).

The first 21 residues, 1-21 (MKGSNIRRWGAALAVVIIAGA), serve as a signal peptide directing secretion. 2 disordered regions span residues 33–53 (GSGA…RHGR) and 389–412 (VVTA…GARS).

The protein belongs to the membrane fusion protein (MFP) (TC 8.A.1) family. In terms of assembly, part of a tripartite efflux system composed of MdtA, MdtB and MdtC.

It is found in the cell inner membrane. The sequence is that of Multidrug resistance protein MdtA from Klebsiella pneumoniae subsp. pneumoniae (strain ATCC 700721 / MGH 78578).